Consider the following 616-residue polypeptide: Chaperone protein HscA (616 aa).

Belongs to the heat shock protein 70 family.

Chaperone involved in the maturation of iron-sulfur cluster-containing proteins. Has a low intrinsic ATPase activity which is markedly stimulated by HscB. Involved in the maturation of IscU. This Escherichia coli O7:K1 (strain IAI39 / ExPEC) protein is Chaperone protein HscA.